The primary structure comprises 355 residues: Phosphoribosylformylglycinamidine cyclo-ligase (355 aa).

It belongs to the AIR synthase family.

The protein resides in the cytoplasm. The enzyme catalyses 2-formamido-N(1)-(5-O-phospho-beta-D-ribosyl)acetamidine + ATP = 5-amino-1-(5-phospho-beta-D-ribosyl)imidazole + ADP + phosphate + H(+). Its pathway is purine metabolism; IMP biosynthesis via de novo pathway; 5-amino-1-(5-phospho-D-ribosyl)imidazole from N(2)-formyl-N(1)-(5-phospho-D-ribosyl)glycinamide: step 2/2. The protein is Phosphoribosylformylglycinamidine cyclo-ligase of Methylobacterium nodulans (strain LMG 21967 / CNCM I-2342 / ORS 2060).